Reading from the N-terminus, the 92-residue chain is Small nuclear ribonucleoprotein E (92 aa).

Residues 18-92 form the Sm domain; sequence INLIFRYLQN…NITLLQSVSN (75 aa).

Belongs to the snRNP Sm proteins family. In terms of assembly, core component of the spliceosomal U1, U2, U4 and U5 small nuclear ribonucleoproteins (snRNPs), the building blocks of the spliceosome. Most spliceosomal snRNPs contain a common set of Sm proteins, SNRPB, SNRPD1, SNRPD2, SNRPD3, SNRPE, SNRPF and SNRPG that assemble in a heptameric protein ring on the Sm site of the small nuclear RNA to form the core snRNP. Component of the U1 snRNP. The U1 snRNP is composed of the U1 snRNA and the 7 core Sm proteins SNRPB, SNRPD1, SNRPD2, SNRPD3, SNRPE, SNRPF and SNRPG, and at least three U1 snRNP-specific proteins SNRNP70/U1-70K, SNRPA/U1-A and SNRPC/U1-C. Component of the U4/U6-U5 tri-snRNP complex composed of the U4, U6 and U5 snRNAs and at least PRPF3, PRPF4, PRPF6, PRPF8, PRPF31, SNRNP200, TXNL4A, SNRNP40, SNRPB, SNRPD1, SNRPD2, SNRPD3, SNRPE, SNRPF, SNRPG, DDX23, CD2BP2, PPIH, SNU13, EFTUD2, SART1 and USP39, plus LSM2, LSM3, LSM4, LSM5, LSM6, LSM7 and LSM8. Component of the U7 snRNP complex, or U7 Sm protein core complex, that is composed of the U7 snRNA and at least LSM10, LSM11, SNRPB, SNRPD3, SNRPE, SNRPF and SNRPG; the complex does not contain SNRPD1 and SNRPD2. Component of the minor spliceosome, which splices U12-type introns. Part of the SMN-Sm complex that contains SMN1, GEMIN2/SIP1, DDX20/GEMIN3, GEMIN4, GEMIN5, GEMIN6, GEMIN7, GEMIN8, STRAP/UNRIP and the Sm proteins SNRPB, SNRPD1, SNRPD2, SNRPD3, SNRPE, SNRPF and SNRPG; catalyzes core snRNPs assembly. Forms a 6S pICln-Sm complex composed of CLNS1A/pICln, SNRPD1, SNRPD2, SNRPE, SNRPF and SNRPG; ring-like structure where CLNS1A/pICln mimics additional Sm proteins and which is unable to assemble into the core snRNP. Interacts with SMN1; the interaction is direct. Interacts with GEMIN2 (via N-terminus); the interaction is direct. Interacts with SNRPF; the interaction is direct. Interacts with SNRPG; the interaction is direct.

It localises to the cytoplasm. It is found in the cytosol. The protein localises to the nucleus. Its function is as follows. Plays a role in pre-mRNA splicing as a core component of the spliceosomal U1, U2, U4 and U5 small nuclear ribonucleoproteins (snRNPs), the building blocks of the spliceosome. Component of both the pre-catalytic spliceosome B complex and activated spliceosome C complexes. As a component of the minor spliceosome, involved in the splicing of U12-type introns in pre-mRNAs. As part of the U7 snRNP it is involved in histone 3'-end processing. The polypeptide is Small nuclear ribonucleoprotein E (SNRPE) (Bos taurus (Bovine)).